A 223-amino-acid chain; its full sequence is Imidazoleglycerol-phosphate dehydratase (223 aa).

Belongs to the imidazoleglycerol-phosphate dehydratase family.

The enzyme catalyses D-erythro-1-(imidazol-4-yl)glycerol 3-phosphate = 3-(imidazol-4-yl)-2-oxopropyl phosphate + H2O. It functions in the pathway amino-acid biosynthesis; L-histidine biosynthesis; L-histidine from 5-phospho-alpha-D-ribose 1-diphosphate: step 6/9. This is Imidazoleglycerol-phosphate dehydratase (HIS3) from Zygosaccharomyces bailii.